Here is a 34-residue protein sequence, read N- to C-terminus: uncharacterized protein (34 aa).

This is an uncharacterized protein from Treponema pallidum (strain Nichols).